We begin with the raw amino-acid sequence, 149 residues long: D-aminoacyl-tRNA deacylase (149 aa).

A Gly-cisPro motif, important for rejection of L-amino acids motif is present at residues 137 to 138 (GP).

It belongs to the DTD family. Homodimer.

The protein resides in the cytoplasm. It carries out the reaction glycyl-tRNA(Ala) + H2O = tRNA(Ala) + glycine + H(+). The catalysed reaction is a D-aminoacyl-tRNA + H2O = a tRNA + a D-alpha-amino acid + H(+). Functionally, an aminoacyl-tRNA editing enzyme that deacylates mischarged D-aminoacyl-tRNAs. Also deacylates mischarged glycyl-tRNA(Ala), protecting cells against glycine mischarging by AlaRS. Acts via tRNA-based rather than protein-based catalysis; rejects L-amino acids rather than detecting D-amino acids in the active site. By recycling D-aminoacyl-tRNA to D-amino acids and free tRNA molecules, this enzyme counteracts the toxicity associated with the formation of D-aminoacyl-tRNA entities in vivo and helps enforce protein L-homochirality. The sequence is that of D-aminoacyl-tRNA deacylase from Clostridium tetani (strain Massachusetts / E88).